The chain runs to 567 residues: ETHYLENE INSENSITIVE 3-like 3 protein (567 aa).

Residues 24–44 (NVAEIDVSDEEIDADDLERRM) are a coiled coil. 2 disordered regions span residues 55–81 (KERQKAGSQGAQTKETPKKISDQAQRK) and 286–393 (IQQP…RNIL). Residues 69-79 (ETPKKISDQAQ) show a composition bias toward basic and acidic residues. A DNA-binding region spans residues 162-288 (SQFVLQDLQD…LNQEESLIQQ (127 aa)). Residues 286–299 (IQQPSSDNGNSNVT) show a composition bias toward polar residues. Positions 300–312 (ETHRRGNNADRRK) are enriched in basic and acidic residues. Basic residues predominate over residues 363 to 372 (KHRRRKRPRI).

Belongs to the EIN3 family. As to quaternary structure, interacts with MYB72.

The protein resides in the nucleus. In terms of biological role, probable transcription factor that may be involved in the ethylene response pathway. This chain is ETHYLENE INSENSITIVE 3-like 3 protein (EIL3), found in Arabidopsis thaliana (Mouse-ear cress).